The sequence spans 32 residues: Photosystem II reaction center protein T (32 aa).

Methionine 1 is modified (N-formylmethionine). At 1 to 2 the chain is on the lumenal side; the sequence is ME. Residues 3–23 form a helical membrane-spanning segment; the sequence is TITYVFIFACIIALFFFAIFF. At 24 to 32 the chain is on the cytoplasmic side; that stretch reads REPPRITKK.

It belongs to the PsbT family. In terms of assembly, PSII is composed of 1 copy each of membrane proteins PsbA, PsbB, PsbC, PsbD, PsbE, PsbF, PsbH, PsbI, PsbJ, PsbK, PsbL, PsbM, PsbT, PsbX, PsbY, PsbZ, Psb30/Ycf12, PsbO, CyanoQ (PsbQ), PsbU, PsbV and a large number of cofactors. It forms dimeric complexes. Part of a photosystem II (PSII) assembly intermediate complex PSII-I; crystallized from a strain deleted of psbJ, it forms monomeric PSII before addition of the oxygen evolving complex. PSII-I includes 3 assembly factors not found in mature PSII (Psb27, Psb28 and Psb34). Requires PSII binds multiple chlorophylls, carotenoids and specific lipids. as cofactor.

Its subcellular location is the cellular thylakoid membrane. Its function is as follows. Found at the monomer-monomer interface of the photosystem II (PS II) dimer, plays a role in assembly and dimerization of PSII. PSII is a light-driven water plastoquinone oxidoreductase, using light energy to abstract electrons from H(2)O, generating a proton gradient subsequently used for ATP formation. The protein is Photosystem II reaction center protein T of Thermosynechococcus vestitus (strain NIES-2133 / IAM M-273 / BP-1).